Here is a 326-residue protein sequence, read N- to C-terminus: Malate dehydrogenase (326 aa).

Residue 11-17 participates in NAD(+) binding; the sequence is GAAGQIG. R92 and R98 together coordinate substrate. Residues N105, Q112, and 129 to 131 contribute to the NAD(+) site; that span reads VGN. N131 and R162 together coordinate substrate. H187 serves as the catalytic Proton acceptor.

Belongs to the LDH/MDH superfamily. MDH type 2 family.

It carries out the reaction (S)-malate + NAD(+) = oxaloacetate + NADH + H(+). Its function is as follows. Catalyzes the reversible oxidation of malate to oxaloacetate. This Chromobacterium violaceum (strain ATCC 12472 / DSM 30191 / JCM 1249 / CCUG 213 / NBRC 12614 / NCIMB 9131 / NCTC 9757 / MK) protein is Malate dehydrogenase.